Reading from the N-terminus, the 1073-residue chain is Probable cellulose synthase A catalytic subunit 2 [UDP-forming] (1073 aa).

At 1–270 the chain is on the cytoplasmic side; sequence MDGAKSGKQC…SSSRINPYRM (270 aa). Positions 13, 16, 32, 35, 40, 43, 55, and 58 each coordinate Zn(2+). An RING-type; degenerate zinc finger spans residues 13–59; it reads CQICGDGVGTAADGELFTACDVCGFPVCRPCYEYERKDGSQACPQCK. Residues 66–98 are disordered; it reads KGSPPILGDESDDVDADDASDVNYPTSGNQDHK. The segment covering 74-85 has biased composition (acidic residues); it reads DESDDVDADDAS. Residues 271–291 traverse the membrane as a helical segment; that stretch reads VIVLRLIVLCIFLHYRITNPV. The Extracellular segment spans residues 292 to 293; it reads RN. Residues 294-314 traverse the membrane as a helical segment; sequence AYPLWLLSVICEIWFALSWIL. Over 315–856 the chain is Cytoplasmic; that stretch reads DQFPKWSPIN…INTTIYPLTS (542 aa). The UDP-alpha-D-glucose site is built by S353, K359, E360, and D389. The active site involves D389. Residues 443–470 are a coiled coil; it reads VKDRRAMKREYEEFKVRVNALVAKAQKV. K530 provides a ligand contact to UDP-alpha-D-glucose. Residues K531 and D555 each coordinate Mn(2+). Positions 655-676 are disordered; sequence GGRKKTKKSKEKSTEKKKSHKH. D773 is an active-site residue. Residues 857–877 traverse the membrane as a helical segment; it reads IPLLLYCILPAICLLTGKFII. Residues 878 to 882 lie on the Extracellular side of the membrane; that stretch reads PEISN. A helical membrane pass occupies residues 883–903; it reads FASIWFISLFLSIFATGILEM. At 904–918 the chain is on the cytoplasmic side; that stretch reads RWSGVGIDEWWRNEQ. The helical transmembrane segment at 919–939 threads the bilayer; that stretch reads FWVIGGISAHLFAVFQGLLKV. The Extracellular portion of the chain corresponds to 940 to 969; it reads LAGIDTSFTVTSKASDEEGDFAELYMFKWT. Residues 970-990 traverse the membrane as a helical segment; sequence TLLIPPTTILIINLVGVVAGI. Topologically, residues 991–1001 are cytoplasmic; sequence SYAINSGYQSW. The chain crosses the membrane as a helical span at residues 1002 to 1022; that stretch reads GPLFGKLFFAFWVIVHLYPFL. Residues 1023 to 1031 lie on the Extracellular side of the membrane; the sequence is KGLMGRQNR. A helical transmembrane segment spans residues 1032–1052; sequence TPTIVVVWAILLASIFSLLWV. At 1053–1073 the chain is on the cytoplasmic side; sequence RIDPFTTRVTGPDTQKCGINC.

It belongs to the glycosyltransferase 2 family. Plant cellulose synthase subfamily. It depends on Mn(2+) as a cofactor. The cofactor is Zn(2+).

Its subcellular location is the cell membrane. It carries out the reaction [(1-&gt;4)-beta-D-glucosyl](n) + UDP-alpha-D-glucose = [(1-&gt;4)-beta-D-glucosyl](n+1) + UDP + H(+). The protein operates within glycan metabolism; plant cellulose biosynthesis. In terms of biological role, probable catalytic subunit of cellulose synthase terminal complexes ('rosettes'), required for beta-1,4-glucan microfibril crystallization, a major mechanism of the cell wall formation. The protein is Probable cellulose synthase A catalytic subunit 2 [UDP-forming] (CESA2) of Oryza sativa subsp. japonica (Rice).